Here is a 412-residue protein sequence, read N- to C-terminus: MEDTTFLEGANLAGITTLMNNLHINEQANLEELEKQVMGKQQSFPTDHFDEELNGLAKSLGINFNDPEFSLDSAHSVISKKPSGRGSDKVHGGIRRDSVCTDSICSDSVCSGSIRSGSIRSGSIRDGSIRDGSIRSGNIRDGSVRSSKTRRGPARNSSSRNDRGYSLSTHRKKYAESEASQKTAISKRDRKNHYAESEYSEKSIKPSTKQVDRLINHLRSNGDPNSFYKKEHDYERKTKLVKLEKINMLLTYLGNEQISTDDIKIPTIDSSMQEIDDVIEMLTLRNVGIRYSSIAEEILIGLARGLEIVFDGTREIPFLNYRPDYTGLHNTFMIKLFKMRYETSQVVGNLVQNMSPLSKICLELGPSLLLYPALIRTKHKASEDLYNLLQKGPEDPFTAYNEIHETLKKNNK.

7 repeat units span residues 112 to 116, 117 to 121, 122 to 126, 127 to 131, 132 to 136, 137 to 141, and 142 to 146. Residues 112–146 form a 7 X 5 AA tandem repeats of G-[NS]-[IV]-R-[DNS] region; that stretch reads GSIRSGSIRSGSIRDGSIRDGSIRSGNIRDGSVRS. The span at 116 to 126 shows a compositional bias: low complexity; that stretch reads SGSIRSGSIRD. Residues 116–208 form a disordered region; sequence SGSIRSGSIR…YSEKSIKPST (93 aa). Residues 192-208 are compositionally biased toward basic and acidic residues; sequence NHYAESEYSEKSIKPST.

This sequence belongs to the asfivirus B407L family.

This is an uncharacterized protein from Ornithodoros (relapsing fever ticks).